Consider the following 232-residue polypeptide: Ornithine carbamoyltransferase (232 aa).

Carbamoyl phosphate contacts are provided by residues Q15, R39, and 66–69 (HPTQ). Residues N99, D163, and 167–168 (SM) contribute to the L-ornithine site. Residues 204–207 (HCLP) and T232 contribute to the carbamoyl phosphate site.

Belongs to the aspartate/ornithine carbamoyltransferase superfamily. OTCase family.

It localises to the cytoplasm. The enzyme catalyses carbamoyl phosphate + L-ornithine = L-citrulline + phosphate + H(+). The protein operates within amino-acid biosynthesis; L-arginine biosynthesis; L-arginine from L-ornithine and carbamoyl phosphate: step 1/3. In terms of biological role, reversibly catalyzes the transfer of the carbamoyl group from carbamoyl phosphate (CP) to the N(epsilon) atom of ornithine (ORN) to produce L-citrulline. The protein is Ornithine carbamoyltransferase (argF) of Neisseria sicca.